A 281-amino-acid chain; its full sequence is Putative dehydrogenase/reductase SDR family member 4-like 1 (281 aa).

An NADP(+)-binding site is contributed by leucine 36 to valine 60. Serine 172 contributes to the substrate binding site. Residue tyrosine 185 is the Proton acceptor of the active site. An NADP(+)-binding site is contributed by lysine 189. Positions serine 279 to leucine 281 match the Peroxisomal targeting signal motif.

The protein belongs to the short-chain dehydrogenases/reductases (SDR) family.

Putative oxidoreductase. This chain is Putative dehydrogenase/reductase SDR family member 4-like 1, found in Homo sapiens (Human).